The primary structure comprises 434 residues: UDP-N-acetylenolpyruvoylglucosamine reductase (434 aa).

In terms of domain architecture, FAD-binding PCMH-type spans 51-238 (IGAAPAGVVE…TAVEFQLTTD (188 aa)). Arginine 216 is a catalytic residue. The active-site Proton donor is serine 299. Residue glutamate 425 is part of the active site.

The protein belongs to the MurB family. It depends on FAD as a cofactor.

The protein resides in the cytoplasm. It carries out the reaction UDP-N-acetyl-alpha-D-muramate + NADP(+) = UDP-N-acetyl-3-O-(1-carboxyvinyl)-alpha-D-glucosamine + NADPH + H(+). It participates in cell wall biogenesis; peptidoglycan biosynthesis. Functionally, cell wall formation. In Corynebacterium jeikeium (strain K411), this protein is UDP-N-acetylenolpyruvoylglucosamine reductase.